The following is a 402-amino-acid chain: Acetylornithine aminotransferase (402 aa).

Residues 117 to 118 (GA) and Phe143 contribute to the pyridoxal 5'-phosphate site. Position 146 (Arg146) interacts with N(2)-acetyl-L-ornithine. A pyridoxal 5'-phosphate-binding site is contributed by 231–234 (DEVQ). Lys260 bears the N6-(pyridoxal phosphate)lysine mark. Residue Thr288 participates in N(2)-acetyl-L-ornithine binding. Thr289 provides a ligand contact to pyridoxal 5'-phosphate.

It belongs to the class-III pyridoxal-phosphate-dependent aminotransferase family. ArgD subfamily. As to quaternary structure, homodimer. It depends on pyridoxal 5'-phosphate as a cofactor.

Its subcellular location is the cytoplasm. The enzyme catalyses N(2)-acetyl-L-ornithine + 2-oxoglutarate = N-acetyl-L-glutamate 5-semialdehyde + L-glutamate. It participates in amino-acid biosynthesis; L-arginine biosynthesis; N(2)-acetyl-L-ornithine from L-glutamate: step 4/4. This Corynebacterium efficiens (strain DSM 44549 / YS-314 / AJ 12310 / JCM 11189 / NBRC 100395) protein is Acetylornithine aminotransferase.